The primary structure comprises 81 residues: Serine rich endogenous peptide 21 (81 aa).

A signal peptide spans Met1 to Ala40. Positions Lys65–Gln79 match the SCOOP motif motif. The short motif at Ser71–Ser73 is the SxS motif essential for MIK2 binding element.

It belongs to the serine rich endogenous peptide (SCOOP) phytocytokine family. Interacts with MIK2 (via extracellular leucine-rich repeat domain); this interaction triggers the formation of complex between MIK2 and the BAK1/SERK3 and SERK4 coreceptors, and subsequent BAK1 activation by phosphorylation.

It is found in the cell membrane. It localises to the secreted. The protein resides in the extracellular space. Its subcellular location is the apoplast. Functionally, brassicaceae-specific phytocytokine (plant endogenous peptide released into the apoplast) perceived by MIK2 in a BAK1/SERK3 and SERK4 coreceptors-dependent manner, that modulates various physiological and antimicrobial processes including growth prevention and reactive oxygen species (ROS) response regulation. This is Serine rich endogenous peptide 21 from Arabidopsis thaliana (Mouse-ear cress).